We begin with the raw amino-acid sequence, 318 residues long: Olfactory receptor 5G26 (318 aa).

Residues 1–28 lie on the Extracellular side of the membrane; sequence MMHRNQTVVTEFFFTGLTSSFHLQIVLF. An N-linked (GlcNAc...) asparagine glycan is attached at asparagine 5. A helical membrane pass occupies residues 29–49; sequence LTFLCVYLATLLGNLGMIILI. Residues 50-56 are Cytoplasmic-facing; the sequence is HLDTRLH. Residues 57 to 77 traverse the membrane as a helical segment; that stretch reads IPMYFFLSHLSFVDACSSSVI. At 78-93 the chain is on the extracellular side; that stretch reads SPKMLSDMFVDKKVIS. A helical membrane pass occupies residues 94–114; that stretch reads FLGCAIQLCLFSQFVVTECFL. Cysteine 97 and cysteine 189 are joined by a disulfide. The Cytoplasmic portion of the chain corresponds to 115–144; it reads LASMAYDRYVAICKPLLYTLIMSQRVCVQL. A helical transmembrane segment spans residues 145–165; that stretch reads VIGPYSIGFVSTMVHIISAFV. Topologically, residues 166–198 are extracellular; sequence LPYCGPNLINHFFCDLLPVLSLACANTQMKKRL. The helical transmembrane segment at 199–219 threads the bilayer; it reads LFIVAGILGVFSGIIILVSYV. At 220–239 the chain is on the cytoplasmic side; sequence YIAITILKISSADGRRKAFS. The chain crosses the membrane as a helical span at residues 240–260; the sequence is TCSSHLTAVSILYGTLFFIYV. Over 261-271 the chain is Extracellular; sequence RPSSSFSLDIN. A helical membrane pass occupies residues 272–292; it reads KVVSLFYTTVIPMLNPFIYSL. Residues 293 to 318 lie on the Cytoplasmic side of the membrane; it reads RNKEVKDALIRTFEKQFCYSFQDKIL.

Belongs to the G-protein coupled receptor 1 family.

The protein localises to the cell membrane. In terms of biological role, potential odorant receptor. The protein is Olfactory receptor 5G26 of Mus musculus (Mouse).